The sequence spans 113 residues: Nucleoid-associated protein Csac_1593 (113 aa).

Belongs to the YbaB/EbfC family. In terms of assembly, homodimer.

It is found in the cytoplasm. It localises to the nucleoid. Functionally, binds to DNA and alters its conformation. May be involved in regulation of gene expression, nucleoid organization and DNA protection. The sequence is that of Nucleoid-associated protein Csac_1593 from Caldicellulosiruptor saccharolyticus (strain ATCC 43494 / DSM 8903 / Tp8T 6331).